The following is a 180-amino-acid chain: Ribosome rescue factor SmrB (180 aa).

A Smr domain is found at 98–173 (LDLHGLTQLQ…GNAALLVLVA (76 aa)).

This sequence belongs to the SmrB family. Associates with collided ribosomes, but not with correctly translating polysomes.

Functionally, acts as a ribosome collision sensor. Detects stalled/collided disomes (pairs of ribosomes where the leading ribosome is stalled and a second ribosome has collided with it) and endonucleolytically cleaves mRNA at the 5' boundary of the stalled ribosome. Stalled/collided disomes form a new interface (primarily via the 30S subunits) that binds SmrB. Cleaved mRNA becomes available for tmRNA ligation, leading to ribosomal subunit dissociation and rescue of stalled ribosomes. The polypeptide is Ribosome rescue factor SmrB (Pectobacterium carotovorum subsp. carotovorum (strain PC1)).